The following is a 151-amino-acid chain: 3-hydroxyacyl-[acyl-carrier-protein] dehydratase FabZ (151 aa).

The active site involves histidine 56.

Belongs to the thioester dehydratase family. FabZ subfamily.

The protein resides in the cytoplasm. The enzyme catalyses a (3R)-hydroxyacyl-[ACP] = a (2E)-enoyl-[ACP] + H2O. In terms of biological role, involved in unsaturated fatty acids biosynthesis. Catalyzes the dehydration of short chain beta-hydroxyacyl-ACPs and long chain saturated and unsaturated beta-hydroxyacyl-ACPs. This Rhodopseudomonas palustris (strain ATCC BAA-98 / CGA009) protein is 3-hydroxyacyl-[acyl-carrier-protein] dehydratase FabZ.